A 495-amino-acid chain; its full sequence is Acyltransferase abl6 (495 aa).

H171 (proton acceptor) is an active-site residue.

The protein belongs to the plant acyltransferase family.

Functionally, acyltransferase; part of the gene cluster that mediates the biosynthesis of abscisic acid (ABA), a phytohormone that acts antagonistically toward salicylic acid (SA), jasmonic acid (JA) and ethylene (ETH) signaling, to impede plant defense responses. The first step of the pathway catalyzes the reaction from farnesyl diphosphate to alpha-ionylideneethane performed by the alpha-ionylideneethane synthase abl3 via a three-step reaction mechanism involving 2 neutral intermediates, beta-farnesene and allofarnesene. The cytochrome P450 monooxygenase abl1 might then be involved in the conversion of alpha-ionylideneethane to alpha-ionylideneacetic acid. Alpha-ionylideneacetic acid is further converted to abscisic acid in 2 steps involving the cytochrome P450 monooxygenase abl2 and the short-chain dehydrogenase/reductase abl4, via the intermediates 1'-deoxy-ABA or 1',4'-trans-diol-ABA, depending on the order of action of these 2 enzymes. Abl2 is responsible for the hydroxylation of carbon atom C-1' and abl4 might be involved in the oxidation of the C-4' carbon atom. The acyltransferase abl6 seems not essential for the biosynthesis of ABA, but it may acetylate ABA as part of the synthesis of another ABA-related molecule. This is Acyltransferase abl6 from Leptosphaeria maculans (strain JN3 / isolate v23.1.3 / race Av1-4-5-6-7-8) (Blackleg fungus).